Here is a 250-residue protein sequence, read N- to C-terminus: Biosynthetic peptidoglycan transglycosylase (250 aa).

The chain crosses the membrane as a helical span at residues 15-35 (AVLLFFVSSLGFVLLYRFVPV).

This sequence belongs to the glycosyltransferase 51 family.

The protein localises to the cell inner membrane. It carries out the reaction [GlcNAc-(1-&gt;4)-Mur2Ac(oyl-L-Ala-gamma-D-Glu-L-Lys-D-Ala-D-Ala)](n)-di-trans,octa-cis-undecaprenyl diphosphate + beta-D-GlcNAc-(1-&gt;4)-Mur2Ac(oyl-L-Ala-gamma-D-Glu-L-Lys-D-Ala-D-Ala)-di-trans,octa-cis-undecaprenyl diphosphate = [GlcNAc-(1-&gt;4)-Mur2Ac(oyl-L-Ala-gamma-D-Glu-L-Lys-D-Ala-D-Ala)](n+1)-di-trans,octa-cis-undecaprenyl diphosphate + di-trans,octa-cis-undecaprenyl diphosphate + H(+). It functions in the pathway cell wall biogenesis; peptidoglycan biosynthesis. In terms of biological role, peptidoglycan polymerase that catalyzes glycan chain elongation from lipid-linked precursors. The chain is Biosynthetic peptidoglycan transglycosylase from Bdellovibrio bacteriovorus (strain ATCC 15356 / DSM 50701 / NCIMB 9529 / HD100).